Here is a 135-residue protein sequence, read N- to C-terminus: MEALLKWSAAVLAAAVSFLYGEWTILLSILLTLVVIDYGTGLVAAGVTGNINSRVGLIGITRKVFIFVMVAIAHMIDTVLLEVGIETEALIFMAAVVFYIVNELISIFENAGRMGLPVPKQLKQAISILKGDESK.

The next 4 membrane-spanning stretches (helical) occupy residues 7–25 (WSAAVLAAAVSFLYGEWTI), 29–51 (ILLTLVVIDYGTGLVAAGVTGNI), 64–85 (VFIFVMVAIAHMIDTVLLEVGI), and 89–108 (ALIFMAAVVFYIVNELISIF).

Belongs to the bacteriophage holin family. Cp-1 holin subfamily.

Its subcellular location is the cell membrane. This is an uncharacterized protein from Halalkalibacterium halodurans (strain ATCC BAA-125 / DSM 18197 / FERM 7344 / JCM 9153 / C-125) (Bacillus halodurans).